A 113-amino-acid polypeptide reads, in one-letter code: Probable leucocin-A immunity protein (113 aa).

This sequence belongs to the immunity protein EntA family.

Functionally, imparts immunity to leucocin-A to naturally sensitive host strains. In Leuconostoc gelidum, this protein is Probable leucocin-A immunity protein.